The primary structure comprises 186 residues: Peptide deformylase (186 aa).

Positions 99 and 141 each coordinate Fe cation. Residue glutamate 142 is part of the active site. Histidine 145 provides a ligand contact to Fe cation.

Belongs to the polypeptide deformylase family. Fe(2+) is required as a cofactor.

It carries out the reaction N-terminal N-formyl-L-methionyl-[peptide] + H2O = N-terminal L-methionyl-[peptide] + formate. Its function is as follows. Removes the formyl group from the N-terminal Met of newly synthesized proteins. Requires at least a dipeptide for an efficient rate of reaction. N-terminal L-methionine is a prerequisite for activity but the enzyme has broad specificity at other positions. In Chlamydia felis (strain Fe/C-56) (Chlamydophila felis), this protein is Peptide deformylase.